A 178-amino-acid polypeptide reads, in one-letter code: Probable DNA-directed RNA polymerase subunit delta (178 aa).

Residues 14-81 form the HTH HARE-type domain; it reads LSLIDVAHFI…GNNTWGLRAW (68 aa). Disordered stretches follow at residues 88–122 and 141–178; these read DEEVQTQTTPKKKRKSDDDEDEDEEILDDDVDYDD and LDEDEDDDDHLPDGIEGDLATVEDDYTDGDYTEDPEDK. 3 stretches are compositionally biased toward acidic residues: residues 105–122, 141–150, and 161–178; these read DDEDEDEEILDDDVDYDD, LDEDEDDDDH, and TVEDDYTDGDYTEDPEDK.

The protein belongs to the RpoE family. In terms of assembly, RNAP is composed of a core of 2 alpha, a beta and a beta' subunits. The core is associated with a delta subunit and one of several sigma factors.

Participates in both the initiation and recycling phases of transcription. In the presence of the delta subunit, RNAP displays an increased specificity of transcription, a decreased affinity for nucleic acids, and an increased efficiency of RNA synthesis because of enhanced recycling. This chain is Probable DNA-directed RNA polymerase subunit delta, found in Listeria monocytogenes serovar 1/2a (strain ATCC BAA-679 / EGD-e).